The chain runs to 454 residues: UDP-N-acetylmuramoylalanine--D-glutamate ligase (454 aa).

Residue 119–125 coordinates ATP; sequence GSNGKTT.

This sequence belongs to the MurCDEF family.

It is found in the cytoplasm. It catalyses the reaction UDP-N-acetyl-alpha-D-muramoyl-L-alanine + D-glutamate + ATP = UDP-N-acetyl-alpha-D-muramoyl-L-alanyl-D-glutamate + ADP + phosphate + H(+). The protein operates within cell wall biogenesis; peptidoglycan biosynthesis. Functionally, cell wall formation. Catalyzes the addition of glutamate to the nucleotide precursor UDP-N-acetylmuramoyl-L-alanine (UMA). The polypeptide is UDP-N-acetylmuramoylalanine--D-glutamate ligase (Latilactobacillus sakei subsp. sakei (strain 23K) (Lactobacillus sakei subsp. sakei)).